A 312-amino-acid chain; its full sequence is Glycerol-3-phosphate dehydrogenase [NAD(P)+] (312 aa).

NADPH is bound by residues Trp11, Arg30, Arg31, and Lys95. The sn-glycerol 3-phosphate site is built by Lys95, Gly123, and Ser125. Position 127 (Ala127) interacts with NADPH. 5 residues coordinate sn-glycerol 3-phosphate: Lys177, Asp230, Ser240, Arg241, and Asn242. Lys177 acts as the Proton acceptor in catalysis. Arg241 contributes to the NADPH binding site. Residues Val265 and Glu267 each coordinate NADPH.

This sequence belongs to the NAD-dependent glycerol-3-phosphate dehydrogenase family.

It is found in the cytoplasm. The catalysed reaction is sn-glycerol 3-phosphate + NAD(+) = dihydroxyacetone phosphate + NADH + H(+). The enzyme catalyses sn-glycerol 3-phosphate + NADP(+) = dihydroxyacetone phosphate + NADPH + H(+). It participates in membrane lipid metabolism; glycerophospholipid metabolism. In terms of biological role, catalyzes the reduction of the glycolytic intermediate dihydroxyacetone phosphate (DHAP) to sn-glycerol 3-phosphate (G3P), the key precursor for phospholipid synthesis. This is Glycerol-3-phosphate dehydrogenase [NAD(P)+] from Helicobacter pylori (strain Shi470).